A 418-amino-acid polypeptide reads, in one-letter code: Putative ion-transport protein YfeO (418 aa).

The next 12 membrane-spanning stretches (helical) occupy residues 10 to 30 (LLLS…LIVV), 54 to 74 (DSPF…GLVI), 99 to 119 (ALPG…SLGP), 120 to 140 (EHPI…RLLP), 149 to 169 (ILAS…AALI), 186 to 206 (LFAP…FFHP), 223 to 243 (ILSG…AVWC), 258 to 278 (VLML…AGPV), 300 to 320 (DYFL…ASGF), 322 to 342 (GGRI…LHEH), 343 to 363 (VPAV…VLVV), and 371 to 391 (LFMA…CIVM).

It belongs to the chloride channel (TC 2.A.49) family.

It is found in the cell membrane. This is Putative ion-transport protein YfeO from Escherichia coli (strain SMS-3-5 / SECEC).